The sequence spans 159 residues: Protein phosphatase 1 regulatory subunit 17 (159 aa).

Disordered stretches follow at residues 1–79 (MSTE…HIPP) and 98–127 (RIPK…PALH). 2 stretches are compositionally biased toward basic and acidic residues: residues 62-73 (SDQKKPRRKDTP) and 111-124 (SDME…KDTP). Thr-72 and Thr-123 each carry phosphothreonine; by PKG/PRKG1.

Substrate for cGMP-dependent protein kinase. Phosphorylation of Thr-72 and Thr-123 is required for its phosphatase activity. Phosphorylated by PRKG1 isoform alpha. Expressed in Purkinje cells of the cerebellum, hippocampus, pons, medulla and eye.

In terms of biological role, inhibits phosphatase activities of protein phosphatase 1 (PP1) and protein phosphatase 2A (PP2A) complexes. The polypeptide is Protein phosphatase 1 regulatory subunit 17 (Ppp1r17) (Mus musculus (Mouse)).